The chain runs to 250 residues: Triosephosphate isomerase (250 aa).

9–11 provides a ligand contact to substrate; sequence NWK. The active-site Electrophile is His-96. Glu-166 acts as the Proton acceptor in catalysis. Substrate-binding positions include Gly-172, Ser-212, and 233-234; that span reads GG.

This sequence belongs to the triosephosphate isomerase family. In terms of assembly, homodimer.

The protein localises to the cytoplasm. It catalyses the reaction D-glyceraldehyde 3-phosphate = dihydroxyacetone phosphate. Its pathway is carbohydrate biosynthesis; gluconeogenesis. It functions in the pathway carbohydrate degradation; glycolysis; D-glyceraldehyde 3-phosphate from glycerone phosphate: step 1/1. Involved in the gluconeogenesis. Catalyzes stereospecifically the conversion of dihydroxyacetone phosphate (DHAP) to D-glyceraldehyde-3-phosphate (G3P). This is Triosephosphate isomerase from Chlorobium phaeovibrioides (strain DSM 265 / 1930) (Prosthecochloris vibrioformis (strain DSM 265)).